Consider the following 531-residue polypeptide: RCC1 and BTB domain-containing protein 1 (531 aa).

RCC1 repeat units lie at residues Asn-40–Thr-91, Asp-93–Ala-145, Gly-147–Asp-198, Ser-199–Asp-250, Gly-252–Thr-302, and Gly-304–Val-356. BTB domains are found at residues Ala-370–Pro-437 and Glu-470–Leu-499.

In the retina, mainly expressed in the inner retina with strong signals reaching up to the outer plexiform layer (at protein level).

The protein localises to the nucleus. May be involved in cell cycle regulation by chromatin remodeling. The polypeptide is RCC1 and BTB domain-containing protein 1 (Rcbtb1) (Mus musculus (Mouse)).